Consider the following 244-residue polypeptide: Phosphatidylserine decarboxylase proenzyme (244 aa).

S212 (schiff-base intermediate with substrate; via pyruvic acid) is an active-site residue. S212 carries the pyruvic acid (Ser); by autocatalysis modification.

Belongs to the phosphatidylserine decarboxylase family. PSD-A subfamily. As to quaternary structure, heterodimer of a large membrane-associated beta subunit and a small pyruvoyl-containing alpha subunit. Pyruvate serves as cofactor. Is synthesized initially as an inactive proenzyme. Formation of the active enzyme involves a self-maturation process in which the active site pyruvoyl group is generated from an internal serine residue via an autocatalytic post-translational modification. Two non-identical subunits are generated from the proenzyme in this reaction, and the pyruvate is formed at the N-terminus of the alpha chain, which is derived from the carboxyl end of the proenzyme. The post-translation cleavage follows an unusual pathway, termed non-hydrolytic serinolysis, in which the side chain hydroxyl group of the serine supplies its oxygen atom to form the C-terminus of the beta chain, while the remainder of the serine residue undergoes an oxidative deamination to produce ammonia and the pyruvoyl prosthetic group on the alpha chain.

It localises to the cell membrane. It carries out the reaction a 1,2-diacyl-sn-glycero-3-phospho-L-serine + H(+) = a 1,2-diacyl-sn-glycero-3-phosphoethanolamine + CO2. Its pathway is phospholipid metabolism; phosphatidylethanolamine biosynthesis; phosphatidylethanolamine from CDP-diacylglycerol: step 2/2. Catalyzes the formation of phosphatidylethanolamine (PtdEtn) from phosphatidylserine (PtdSer). This is Phosphatidylserine decarboxylase proenzyme from Granulibacter bethesdensis (strain ATCC BAA-1260 / CGDNIH1).